Here is a 270-residue protein sequence, read N- to C-terminus: Formamidopyrimidine-DNA glycosylase (270 aa).

Catalysis depends on P2, which acts as the Schiff-base intermediate with DNA. Residue E3 is the Proton donor of the active site. K57 (proton donor; for beta-elimination activity) is an active-site residue. Residues H90, R109, and R151 each contribute to the DNA site. The FPG-type zinc-finger motif lies at 236-270 (QVYGRGGKLCMVCSNRLKEVRLGQRSTVYCTQCQR). R260 (proton donor; for delta-elimination activity) is an active-site residue.

Belongs to the FPG family. Monomer. It depends on Zn(2+) as a cofactor.

The catalysed reaction is Hydrolysis of DNA containing ring-opened 7-methylguanine residues, releasing 2,6-diamino-4-hydroxy-5-(N-methyl)formamidopyrimidine.. The enzyme catalyses 2'-deoxyribonucleotide-(2'-deoxyribose 5'-phosphate)-2'-deoxyribonucleotide-DNA = a 3'-end 2'-deoxyribonucleotide-(2,3-dehydro-2,3-deoxyribose 5'-phosphate)-DNA + a 5'-end 5'-phospho-2'-deoxyribonucleoside-DNA + H(+). Functionally, involved in base excision repair of DNA damaged by oxidation or by mutagenic agents. Acts as a DNA glycosylase that recognizes and removes damaged bases. Has a preference for oxidized purines, such as 7,8-dihydro-8-oxoguanine (8-oxoG). Has AP (apurinic/apyrimidinic) lyase activity and introduces nicks in the DNA strand. Cleaves the DNA backbone by beta-delta elimination to generate a single-strand break at the site of the removed base with both 3'- and 5'-phosphates. This chain is Formamidopyrimidine-DNA glycosylase, found in Idiomarina loihiensis (strain ATCC BAA-735 / DSM 15497 / L2-TR).